Reading from the N-terminus, the 467-residue chain is Phosphoglucosamine mutase (467 aa).

Ser-120 acts as the Phosphoserine intermediate in catalysis. 4 residues coordinate Mg(2+): Ser-120, Asp-261, Asp-263, and Asp-265. Ser-120 is modified (phosphoserine).

The protein belongs to the phosphohexose mutase family. Mg(2+) is required as a cofactor. Activated by phosphorylation.

It catalyses the reaction alpha-D-glucosamine 1-phosphate = D-glucosamine 6-phosphate. In terms of biological role, catalyzes the conversion of glucosamine-6-phosphate to glucosamine-1-phosphate. This chain is Phosphoglucosamine mutase, found in Parafrankia sp. (strain EAN1pec).